The primary structure comprises 145 residues: MTKREYNSQPEMKEEVLAYLLQLSASLVLPVAIWLIAAGQIFTCLRGYTISNYQEKVEEKLCSTLVDKISEKLADLFPVYGITPSRNAPFPTILEQLLATVSQEERLAYLSNMYNSLIEMGIDSPCFYPIVQTFLFLMGGGGGPA.

The chain crosses the membrane as a helical span at residues 16–36 (VLAYLLQLSASLVLPVAIWLI).

It localises to the mitochondrion membrane. This is an uncharacterized protein from Arabidopsis thaliana (Mouse-ear cress).